The chain runs to 630 residues: Glutamyl-tRNA(Gln) amidotransferase subunit E (630 aa).

This sequence belongs to the GatB/GatE family. GatE subfamily. As to quaternary structure, heterodimer of GatD and GatE.

It carries out the reaction L-glutamyl-tRNA(Gln) + L-glutamine + ATP + H2O = L-glutaminyl-tRNA(Gln) + L-glutamate + ADP + phosphate + H(+). Its function is as follows. Allows the formation of correctly charged Gln-tRNA(Gln) through the transamidation of misacylated Glu-tRNA(Gln) in organisms which lack glutaminyl-tRNA synthetase. The reaction takes place in the presence of glutamine and ATP through an activated gamma-phospho-Glu-tRNA(Gln). The GatDE system is specific for glutamate and does not act on aspartate. This Methanocaldococcus jannaschii (strain ATCC 43067 / DSM 2661 / JAL-1 / JCM 10045 / NBRC 100440) (Methanococcus jannaschii) protein is Glutamyl-tRNA(Gln) amidotransferase subunit E.